The sequence spans 309 residues: Olfactory receptor 5H2 (309 aa).

Over 1-28 the chain is Extracellular; that stretch reads MEQDNTTLLTEFVLTGLTYQPEWKMPLF. The N-linked (GlcNAc...) asparagine glycan is linked to Asn5. Residues 29–49 form a helical membrane-spanning segment; the sequence is LVFLVIYLITIVWNLGLIALI. Residues 50-56 are Cytoplasmic-facing; it reads WNDPQLH. Residues 57 to 77 traverse the membrane as a helical segment; that stretch reads IPMYFFLGSLAFVDAWISSTV. Over 78-97 the chain is Extracellular; it reads TPKMLVNFLAKNRMISLSEC. Cysteines 97 and 179 form a disulfide. The chain crosses the membrane as a helical span at residues 98-118; sequence MIQFFSFAFGGTTECFLLATM. Topologically, residues 119 to 143 are cytoplasmic; the sequence is AYDRYVAICKPLLYPVIMNNSLCIR. A helical membrane pass occupies residues 144-164; the sequence is LLAFSFLGGFLHALIHEVLIF. Over 165–193 the chain is Extracellular; it reads RLTFCNSNIIHHFYCDIIPLFMISCTDPS. A helical transmembrane segment spans residues 194-214; that stretch reads INFLMVFILSGSIQVFTIVTV. Over 215 to 239 the chain is Cytoplasmic; sequence LNSYTFALFTILKKKSVRGVRKAFS. The helical transmembrane segment at 240–260 threads the bilayer; the sequence is TCGAHLLSVSLYYGPLIFMYL. Residues 261 to 271 are Extracellular-facing; that stretch reads RPASPQADDQD. Residues 272–292 form a helical membrane-spanning segment; it reads MIDSVFYTIIIPLLNPIIYSL. The Cytoplasmic portion of the chain corresponds to 293–309; it reads RNKQVIDSFTKMVKRNV.

It belongs to the G-protein coupled receptor 1 family.

The protein localises to the cell membrane. Odorant receptor. This is Olfactory receptor 5H2 (OR5H2) from Homo sapiens (Human).